The following is a 625-amino-acid chain: DNA-directed RNA polymerase subunit gamma (625 aa).

Zn(2+)-binding residues include cysteine 71, cysteine 73, cysteine 86, and cysteine 89. 3 residues coordinate Mg(2+): aspartate 467, aspartate 469, and aspartate 471.

This sequence belongs to the RNA polymerase beta' chain family. RpoC1 subfamily. In cyanobacteria the RNAP catalytic core is composed of 2 alpha, 1 beta, 1 beta', 1 gamma and 1 omega subunit. When a sigma factor is associated with the core the holoenzyme is formed, which can initiate transcription. The cofactor is Mg(2+). Requires Zn(2+) as cofactor.

It carries out the reaction RNA(n) + a ribonucleoside 5'-triphosphate = RNA(n+1) + diphosphate. Its function is as follows. DNA-dependent RNA polymerase catalyzes the transcription of DNA into RNA using the four ribonucleoside triphosphates as substrates. This chain is DNA-directed RNA polymerase subunit gamma, found in Rippkaea orientalis (strain PCC 8801 / RF-1) (Cyanothece sp. (strain PCC 8801)).